An 84-amino-acid polypeptide reads, in one-letter code: Putative lipoprotein RzoQ (84 aa).

Residues 1–22 (MRNRNLLKFLPGLLICLIVLTS) form the signal peptide. Cysteine 23 carries the N-palmitoyl cysteine lipid modification. A lipid anchor (S-diacylglycerol cysteine) is attached at cysteine 23.

The protein resides in the cell membrane. This Escherichia coli (strain K12) protein is Putative lipoprotein RzoQ (rzoQ).